Reading from the N-terminus, the 604-residue chain is Aspartate--tRNA(Asp/Asn) ligase (604 aa).

An L-aspartate-binding site is contributed by glutamate 175. Positions 199–202 (QQFK) are aspartate. L-aspartate is bound by residues arginine 221 and histidine 456. 221–223 (RDE) contacts ATP. Glutamate 496 lines the ATP pocket. An L-aspartate-binding site is contributed by arginine 503. 548–551 (GVDR) is a binding site for ATP.

Belongs to the class-II aminoacyl-tRNA synthetase family. Type 1 subfamily. In terms of assembly, homodimer.

It localises to the cytoplasm. The enzyme catalyses tRNA(Asx) + L-aspartate + ATP = L-aspartyl-tRNA(Asx) + AMP + diphosphate. Aspartyl-tRNA synthetase with relaxed tRNA specificity since it is able to aspartylate not only its cognate tRNA(Asp) but also tRNA(Asn). Reaction proceeds in two steps: L-aspartate is first activated by ATP to form Asp-AMP and then transferred to the acceptor end of tRNA(Asp/Asn). The polypeptide is Aspartate--tRNA(Asp/Asn) ligase (Methylorubrum extorquens (strain CM4 / NCIMB 13688) (Methylobacterium extorquens)).